The following is a 301-amino-acid chain: 2-methoxy-6-polyprenyl-1,4-benzoquinol methylase, mitochondrial (301 aa).

The transit peptide at 1-16 (MQTTRSTRLLSLARRF) directs the protein to the mitochondrion. The segment covering 20-31 (RTASQSAQNSKG) has biased composition (polar residues). The segment at 20 to 44 (RTASQSAQNSKGMASGAESISGKEK) is disordered. Residues Thr111, Asp139, and 173–174 (DA) each bind S-adenosyl-L-methionine.

The protein belongs to the class I-like SAM-binding methyltransferase superfamily. MenG/UbiE family. Component of a multi-subunit COQ enzyme complex.

It localises to the mitochondrion inner membrane. The catalysed reaction is a 2-methoxy-6-(all-trans-polyprenyl)benzene-1,4-diol + S-adenosyl-L-methionine = a 5-methoxy-2-methyl-3-(all-trans-polyprenyl)benzene-1,4-diol + S-adenosyl-L-homocysteine + H(+). It functions in the pathway cofactor biosynthesis; ubiquinone biosynthesis. In terms of biological role, methyltransferase required for the conversion of 2-polyprenyl-6-methoxy-1,4-benzoquinol (DDMQH2) to 2-polyprenyl-3-methyl-6-methoxy-1,4-benzoquinol (DMQH2). The protein is 2-methoxy-6-polyprenyl-1,4-benzoquinol methylase, mitochondrial of Drosophila melanogaster (Fruit fly).